Consider the following 578-residue polypeptide: Arginine--tRNA ligase (578 aa).

A 'HIGH' region motif is present at residues 127-137; it reads PNLAKEMHVGH.

Belongs to the class-I aminoacyl-tRNA synthetase family. Monomer.

The protein resides in the cytoplasm. It catalyses the reaction tRNA(Arg) + L-arginine + ATP = L-arginyl-tRNA(Arg) + AMP + diphosphate. The protein is Arginine--tRNA ligase of Pseudomonas putida (strain ATCC 47054 / DSM 6125 / CFBP 8728 / NCIMB 11950 / KT2440).